A 383-amino-acid chain; its full sequence is MEESSGLSSMKFFSDQHLSYADILLPHEARARIEVSVLNLLRILNSPDPAISDLSLINRKRSNSCINKGILTDVSYIFLSTSFTKSSLTNAKTAKAFVRVWKVMEICFQILLQEKRVTQRELFYKLLCDSPDYFSSQIEVNRSVQDVVALLRCSRYSLGIMASSRGLVAGRLFLQEPGKEAVDCSACGSSGFAITGDLNLLDNTIMRTDARYIIIVEKHAIFHRLVEDRVFNHIPCVFITAKGYPDIATRFFLHRMSTTFPDLPILVLVDWNPAGLAILCTFKFGSIGMGLEAYRYACNVKWIGLRGDDLNLIPEESLVPLKPKDSQIAKSLLSSKILQENYIEELSLMVQTGKRAEIEALYCHGYNYLGKYIATKIVQGKYI.

The Topo IIA-type catalytic domain occupies 24–167; sequence LLPHEARARI…LGIMASSRGL (144 aa). The active-site O-(5'-phospho-DNA)-tyrosine intermediate is the tyrosine 124. Glutamate 217 and aspartate 270 together coordinate Mg(2+).

The protein belongs to the TOP6A family. As to quaternary structure, heterotetramer of 2 SPO11 (SPO11-1 and/or SPO11-2) and 2 MTOPVIB chains. Interacts with MTOPVIB. May form a heterodimer with SPO11-1. Interacts with PRD1. Does not interact with TOP6B. Requires Mg(2+) as cofactor. As to expression, very low expression in flowers and shoots.

The protein localises to the nucleus. The catalysed reaction is ATP-dependent breakage, passage and rejoining of double-stranded DNA.. Functionally, component of a topoisomerase 6 complex specifically required for meiotic recombination. Together with MTOPVIB, mediates DNA cleavage that forms the double-strand breaks (DSB) that initiate meiotic recombination. The complex promotes relaxation of negative and positive supercoiled DNA and DNA decatenation through cleavage and ligation cycles. This chain is Meiotic recombination protein SPO11-2 (SPO11-2), found in Arabidopsis thaliana (Mouse-ear cress).